A 528-amino-acid polypeptide reads, in one-letter code: Calcium-dependent protein kinase 17 (528 aa).

The tract at residues 1-65 is disordered; sequence MGNCCSHGRD…GPIGPVLGRP (65 aa). Gly2 carries N-myristoyl glycine lipidation. Low complexity predominate over residues 20-45; it reads NGASASNAANSTGPTAEASVPQSKHA. The 259-residue stretch at 73-331 folds into the Protein kinase domain; that stretch reads YSLGKELGRG…AAQVLNHPWI (259 aa). ATP contacts are provided by residues 79-87 and Lys102; that span reads LGRGQFGVT. The active-site Proton acceptor is the Asp197. Residue Ser237 is modified to Phosphoserine. Positions 337–367 are autoinhibitory domain; sequence APDVPLDNAVMSRLKQFKAMNNFKKVALRVI. 4 consecutive EF-hand domains span residues 374–409, 410–445, 446–481, and 485–516; these read EEIMGLKEMFKGMDTDSSGTITLEELRQGLAKQGTR, LSEYEVQQLMEAADADGNGTIDYGEFIAATMHINRL, DREEHLYSAFQHFDKDNSGYITMEELEQALREFGMN, and DIKEIISEVDGDNDGRINYDEFVAMMRKGNPD. Residues Asp387, Asp389, Ser391, Thr393, Glu398, Asp423, Asp425, Asn427, Thr429, Glu434, Asp459, Asp461, Ser463, Tyr465, Glu470, Asp494, Asp496, Asp498, Arg500, and Glu505 each coordinate Ca(2+).

It belongs to the protein kinase superfamily. Ser/Thr protein kinase family. CDPK subfamily.

It localises to the membrane. It catalyses the reaction L-seryl-[protein] + ATP = O-phospho-L-seryl-[protein] + ADP + H(+). The enzyme catalyses L-threonyl-[protein] + ATP = O-phospho-L-threonyl-[protein] + ADP + H(+). Its activity is regulated as follows. Activated by calcium. Autophosphorylation may play an important role in the regulation of the kinase activity. Its function is as follows. May play a role in signal transduction pathways that involve calcium as a second messenger. In Arabidopsis thaliana (Mouse-ear cress), this protein is Calcium-dependent protein kinase 17 (CPK17).